The following is a 100-amino-acid chain: Apolipoprotein C-II (100 aa).

A signal peptide spans 1–22 (MGSRFLLALFLVLLVLGCEVQA). The segment at 66–74 (SVDEKLRDM) is lipid binding. The interval 78–100 (SSAAMTTYASIFTDQIFTLLKGE) is lipoprotein lipase cofactor.

It belongs to the apolipoprotein C2 family. Post-translationally, proapolipoprotein C-II is synthesized as a sialic acid containing glycoprotein which is subsequently desialylated prior to its proteolytic processing. In terms of processing, proapolipoprotein C-II, the major form found in plasma undergoes proteolytic cleavage of its N-terminal hexapeptide to generate the mature form apolipoprotein C-II, which occurs as the minor form in plasma.

The protein localises to the secreted. Functionally, component of chylomicrons, very low-density lipoproteins (VLDL), low-density lipoproteins (LDL), and high-density lipoproteins (HDL) in plasma. Plays an important role in lipoprotein metabolism as an activator of lipoprotein lipase. The sequence is that of Apolipoprotein C-II (APOC2) from Bramus lutescens (Transcaucasian mole vole).